A 348-amino-acid polypeptide reads, in one-letter code: Flagellar P-ring protein (348 aa).

The first 16 residues, 1 to 16 (MRVLTIFLLFMTSIFA), serve as a signal peptide directing secretion.

This sequence belongs to the FlgI family. In terms of assembly, the basal body constitutes a major portion of the flagellar organelle and consists of four rings (L,P,S, and M) mounted on a central rod.

It localises to the periplasm. It is found in the bacterial flagellum basal body. In terms of biological role, assembles around the rod to form the L-ring and probably protects the motor/basal body from shearing forces during rotation. The chain is Flagellar P-ring protein from Campylobacter jejuni subsp. jejuni serotype O:6 (strain 81116 / NCTC 11828).